The primary structure comprises 187 residues: ATP-dependent protease subunit HslV (187 aa).

The active site involves Thr7. The Na(+) site is built by Ala162, Cys165, and Thr168.

Belongs to the peptidase T1B family. HslV subfamily. In terms of assembly, a double ring-shaped homohexamer of HslV is capped on each side by a ring-shaped HslU homohexamer. The assembly of the HslU/HslV complex is dependent on binding of ATP.

It localises to the cytoplasm. It catalyses the reaction ATP-dependent cleavage of peptide bonds with broad specificity.. With respect to regulation, allosterically activated by HslU binding. In terms of biological role, protease subunit of a proteasome-like degradation complex believed to be a general protein degrading machinery. In Methylococcus capsulatus (strain ATCC 33009 / NCIMB 11132 / Bath), this protein is ATP-dependent protease subunit HslV.